The chain runs to 252 residues: MTEPIISINDLSVYFNKKKAINNVTMDFYPNEITALIGPSGSGKSTLLRSINRMGDLNPECTVTGAVSYNGHNVYSPRTDTVELRKEIGMVFQQPNPFPMSIYENVVYGLRINGIKDKAVLDKAVEESLKGASVWEEVKDRLHDSALGLSGGQQQRVCVARVLATSPKVILLDEPTSALDPISAGKIEETLYNLKDQYTLLLVTRSMQQASRISQRTAFFLDGELIEYSSTKDMFLNPQHKETEDYITGKLG.

An ABC transporter domain is found at 6–247 (ISINDLSVYF…PQHKETEDYI (242 aa)). 38–45 (GPSGSGKS) provides a ligand contact to ATP.

This sequence belongs to the ABC transporter superfamily. Phosphate importer (TC 3.A.1.7) family. In terms of assembly, the complex is composed of two ATP-binding proteins (PstB), two transmembrane proteins (PstC and PstA) and a solute-binding protein (PstS).

It is found in the cell membrane. It catalyses the reaction phosphate(out) + ATP + H2O = ADP + 2 phosphate(in) + H(+). Functionally, part of the ABC transporter complex PstSACB involved in phosphate import. Responsible for energy coupling to the transport system. In Streptococcus thermophilus (strain CNRZ 1066), this protein is Phosphate import ATP-binding protein PstB 2.